A 212-amino-acid chain; its full sequence is Leucine efflux protein (212 aa).

The next 6 membrane-spanning stretches (helical) occupy residues 12 to 32 (TYLV…LFVL), 49 to 69 (GVFI…ATLI), 71 to 91 (TTPI…LYLG), 122 to 142 (ILSL…VQFI), 153 to 173 (FFIL…FLII), and 188 to 208 (LAKV…ARLA).

It belongs to the Rht family.

The protein localises to the cell inner membrane. It carries out the reaction L-leucine(in) + H(+)(out) = L-leucine(out) + H(+)(in). Functionally, exporter of leucine. The chain is Leucine efflux protein (leuE) from Shigella sonnei (strain Ss046).